The following is a 392-amino-acid chain: MSCPMRSGFVDSVQGGHHLGSEAGMLYGEYLMLDKVLSAQRMLSVEGKKPVHDEHLFIVTHQAYELWFKQIIFELDSIRDLFSTEHIEESRTLEILKRLNRIVMILKLLVDQVPILETMTPLDFMDFRDYLSPASGFQSLQFRLLENKLGVKSEHRVKYNQKYTEVFASDPGAIERIGTTETEPSLADLVQKWLERTPGLEQDGFNFWGKFQESVEQLLAEQEASAMSEEHENVREYRLMDIDKRREVYKSIFDAQVHDALVARGERRFTHKALQGAIMITFYRDEPRFSQPHQLLMLLMDIDSLITKWRYNHVIMVQRMIGSQQLGTGGSSGYQYLRSTLSDRYKVFLDLFNLSTFLIPRQSIPPLTNEMQKALNLAWGSPAHFARNGSLH.

Substrate is bound by residues 57–61 (FIVTH) and Arg-128. His-313 lines the heme pocket. Substrate is bound at residue Thr-328.

It belongs to the tryptophan 2,3-dioxygenase family. Homotetramer. Dimer of dimers. Heme serves as cofactor.

The catalysed reaction is L-tryptophan + O2 = N-formyl-L-kynurenine. It functions in the pathway amino-acid degradation; L-tryptophan degradation via kynurenine pathway; L-kynurenine from L-tryptophan: step 1/2. The protein operates within pigment biosynthesis; ommochrome biosynthesis. In terms of biological role, heme-dependent dioxygenase that catalyzes the oxidative cleavage of the L-tryptophan (L-Trp) pyrrole ring and converts L-tryptophan to N-formyl-L-kynurenine. Catalyzes the oxidative cleavage of the indole moiety. The protein is Tryptophan 2,3-dioxygenase of Anopheles gambiae (African malaria mosquito).